The following is a 264-amino-acid chain: tRNA (guanine-N(1)-)-methyltransferase (264 aa).

Residues Gly-125 and 145-150 (LGDFVL) each bind S-adenosyl-L-methionine.

It belongs to the RNA methyltransferase TrmD family. Homodimer.

The protein resides in the cytoplasm. The catalysed reaction is guanosine(37) in tRNA + S-adenosyl-L-methionine = N(1)-methylguanosine(37) in tRNA + S-adenosyl-L-homocysteine + H(+). Specifically methylates guanosine-37 in various tRNAs. This is tRNA (guanine-N(1)-)-methyltransferase from Burkholderia mallei (strain NCTC 10247).